The chain runs to 153 residues: Lipoprotein signal peptidase (153 aa).

Helical transmembrane passes span 6–26 (IVAV…SYIV), 60–80 (QQLL…WYLH), and 85–105 (DSFW…GNFI). Residues D115 and D131 contribute to the active site. The helical transmembrane segment at 124–144 (FAIFNVADSYLTVGVIILLIA) threads the bilayer.

It belongs to the peptidase A8 family.

The protein localises to the cell membrane. The enzyme catalyses Release of signal peptides from bacterial membrane prolipoproteins. Hydrolyzes -Xaa-Yaa-Zaa-|-(S,diacylglyceryl)Cys-, in which Xaa is hydrophobic (preferably Leu), and Yaa (Ala or Ser) and Zaa (Gly or Ala) have small, neutral side chains.. The protein operates within protein modification; lipoprotein biosynthesis (signal peptide cleavage). Its function is as follows. This protein specifically catalyzes the removal of signal peptides from prolipoproteins. In Streptococcus pneumoniae (strain ATCC BAA-255 / R6), this protein is Lipoprotein signal peptidase.